We begin with the raw amino-acid sequence, 135 residues long: Fatty acid-binding protein homolog 6 (135 aa).

A fatty acid-binding positions include arginine 110 and 130-132 (REY).

This sequence belongs to the calycin superfamily. Fatty-acid binding protein (FABP) family.

The sequence is that of Fatty acid-binding protein homolog 6 (lbp-6) from Caenorhabditis elegans.